Here is a 137-residue protein sequence, read N- to C-terminus: Large-conductance mechanosensitive channel (137 aa).

2 consecutive transmembrane segments (helical) span residues 10 to 30 (FAMR…AAFG) and 76 to 96 (GTFI…FSAV).

It belongs to the MscL family. As to quaternary structure, homopentamer.

It is found in the cell inner membrane. Channel that opens in response to stretch forces in the membrane lipid bilayer. May participate in the regulation of osmotic pressure changes within the cell. The polypeptide is Large-conductance mechanosensitive channel (Yersinia pseudotuberculosis serotype O:1b (strain IP 31758)).